Reading from the N-terminus, the 478-residue chain is PRAME family member 11 (478 aa).

The stretch at 99 to 126 (RWKLQVLDLQDVCENFWMVWSEAMAHGC) is one LRR 1; degenerate repeat. The LRR 2; degenerate repeat unit spans residues 181–205 (HLCCKKLKILGMPFRNIRSILKMVN). Residues 206 to 232 (LDCIQEVEVNCKWILPILTQFTPYLGH) form an LRR 3; degenerate repeat. Residues 233-268 (LRNLQKLVLSHMDVSRYVSPEQKKEIVTQFTTQFLK) form an LRR 4; degenerate repeat. LRR repeat units follow at residues 269–294 (LRCLQKLYMNSVSFLEGHLDQLLSCL), 295–326 (KTSLKVLTITNCVLLESDLKHLSQCPSISQLK), 327–347 (TLDLSGIRLTNYSLVPLQILL), 351–378 (AATLEYLDLDDCGIIDSQVNAILPALSR), and 379–403 (CFELNTFSFCGNPICMATLENLLSH).

Belongs to the PRAME family.

The polypeptide is PRAME family member 11 (Homo sapiens (Human)).